The primary structure comprises 128 residues: Large-conductance mechanosensitive channel (128 aa).

2 consecutive transmembrane segments (helical) span residues 10-30 and 76-96; these read FAMR…SAFG and GLFI…FMMI.

It belongs to the MscL family. As to quaternary structure, homopentamer.

Its subcellular location is the cell inner membrane. Its function is as follows. Channel that opens in response to stretch forces in the membrane lipid bilayer. May participate in the regulation of osmotic pressure changes within the cell. The chain is Large-conductance mechanosensitive channel from Haemophilus influenzae (strain PittEE).